The sequence spans 230 residues: Ion-translocating oxidoreductase complex subunit E (230 aa).

The next 6 helical transmembrane spans lie at 11–31 (GMWA…LLAV), 39–59 (LGLG…VSLV), 69–89 (IPVF…LMNA), 93–113 (GLYL…IIIG), 132–152 (FWMG…REII), and 182–202 (SFLL…LIAL).

The protein belongs to the NqrDE/RnfAE family. In terms of assembly, the complex is composed of six subunits: RnfA, RnfB, RnfC, RnfD, RnfE and RnfG.

Its subcellular location is the cell inner membrane. Part of a membrane-bound complex that couples electron transfer with translocation of ions across the membrane. The protein is Ion-translocating oxidoreductase complex subunit E of Vibrio atlanticus (strain LGP32) (Vibrio splendidus (strain Mel32)).